The following is a 181-amino-acid chain: MTTETISLIRSSIKSIQDYPKPGILFRDVTSLLEDAKAYQATINLLVDRYKDMGFTKVVGTEARGFLFGAPLALELGVGFVPVRKPGKLPRPTIAQSYELEYGVDTLEIHTDAIVEGDKVLVVDDLLATGGTIEATTKLIRQLGGEVEHAAFVINLPEIGGDKRLEGLGLNVYSICEFEGH.

Belongs to the purine/pyrimidine phosphoribosyltransferase family. As to quaternary structure, homodimer.

It is found in the cytoplasm. The catalysed reaction is AMP + diphosphate = 5-phospho-alpha-D-ribose 1-diphosphate + adenine. Its pathway is purine metabolism; AMP biosynthesis via salvage pathway; AMP from adenine: step 1/1. Its function is as follows. Catalyzes a salvage reaction resulting in the formation of AMP, that is energically less costly than de novo synthesis. This Vibrio campbellii (strain ATCC BAA-1116) protein is Adenine phosphoribosyltransferase.